The chain runs to 188 residues: Peptidyl-tRNA hydrolase (188 aa).

A tRNA-binding site is contributed by Tyr16. The active-site Proton acceptor is the His21. The tRNA site is built by Phe66, Asn68, and Asn114.

The protein belongs to the PTH family. As to quaternary structure, monomer.

The protein localises to the cytoplasm. It carries out the reaction an N-acyl-L-alpha-aminoacyl-tRNA + H2O = an N-acyl-L-amino acid + a tRNA + H(+). Its function is as follows. Hydrolyzes ribosome-free peptidyl-tRNAs (with 1 or more amino acids incorporated), which drop off the ribosome during protein synthesis, or as a result of ribosome stalling. Functionally, catalyzes the release of premature peptidyl moieties from peptidyl-tRNA molecules trapped in stalled 50S ribosomal subunits, and thus maintains levels of free tRNAs and 50S ribosomes. The sequence is that of Peptidyl-tRNA hydrolase from Geobacter sp. (strain M21).